We begin with the raw amino-acid sequence, 138 residues long: Small ribosomal subunit protein uS9c (138 aa).

Belongs to the universal ribosomal protein uS9 family.

The protein localises to the plastid. It is found in the chloroplast. The polypeptide is Small ribosomal subunit protein uS9c (rps9) (Trieres chinensis (Marine centric diatom)).